Consider the following 337-residue polypeptide: MINNVSSLFPTVNRNITAVYKKSSFSVSPQKITLNPVKISSPFSPSSSSISATTLFRAPNAHSASFHRQSTAESSLHQQLPNVRQRLIQHLAEHGIKPARSMAEHIPPAPNWPAPPPPVQNEQSRPLPDVAQRLVQHLAEHGIQPARNMAEHIPPAPNWPAPPLPVQNEQSRPLPDVAQRLVQHLAEHGIQPARSMAEHIPPAPNWPAPPPPVQNEQSRPLPDVAQRLMQHLAEHGIQPARNMAEHIPPAPNWPAPTPPVQNEQSRPLPDVAQRLMQHLAEHGIQPARNMAEHIPPAPNWPAPTPPVQNEQSRPLPDVAQRLMQHLAEHGINTSKRS.

5 repeat units span residues 96–142 (IKPA…AEHG), 143–189 (IQPA…AEHG), 190–236 (IQPA…AEHG), 237–283 (IQPA…AEHG), and 284–330 (IQPA…AEHG). The segment at 96 to 330 (IKPARSMAEH…RLMQHLAEHG (235 aa)) is 5 X 48 AA approximate tandem repeats. Residues 291–312 (AEHIPPAPNWPAPTPPVQNEQS) are disordered. Positions 295 to 306 (PPAPNWPAPTPP) are enriched in pro residues.

The protein belongs to the EspF(U)/TccP family. In terms of assembly, interacts with host BAIAP2 and host WASL/N-WASP. Can also interact with host proteins BAIAP2L1 and WAS/WASP.

The protein resides in the secreted. It is found in the host cytoplasm. Its function is as follows. Required for efficient pedestal formation in host epithelial cells during infection. Acts as an intermediate between Tir (via host BAIAP2) and host WASL/N-WASP. Directly binds and activates WASL/N-WASP, which stimulates actin polymerization and leads to the formation of actin pedestals at the sites of bacterial adhesion. This is Secreted effector protein EspF(U) (espF(U)) from Escherichia coli O157:H7.